We begin with the raw amino-acid sequence, 386 residues long: Short-chain dehydrogenase/reductase family 42E member 1 (386 aa).

Tyrosine 150 acts as the Proton acceptor in catalysis. Lysine 154 provides a ligand contact to NAD(+). Transmembrane regions (helical) follow at residues 279-299 (FPLS…FFIS) and 363-383 (YLIW…SWLP).

Belongs to the 3-beta-HSD family.

Its subcellular location is the membrane. The polypeptide is Short-chain dehydrogenase/reductase family 42E member 1 (sdr42e1) (Xenopus laevis (African clawed frog)).